A 556-amino-acid chain; its full sequence is Protein misato homolog 1 (556 aa).

Position 41 is a phosphoserine (Ser-41).

Belongs to the misato family.

The protein localises to the mitochondrion outer membrane. It is found in the cytoplasm. Its function is as follows. Involved in the regulation of mitochondrial distribution and morphology. Required for mitochondrial fusion and mitochondrial network formation. The sequence is that of Protein misato homolog 1 (Msto1) from Mus musculus (Mouse).